The following is a 76-amino-acid chain: MIFKVFYQKDNTRSPRRETTDALYLDLDVATKEEGVILARELLAKNTAYHVEFIDSLSDESVEYEKETGVFEITSF.

This sequence belongs to the RNA polymerase subunit epsilon family. RNAP is composed of a core of 2 alpha, a beta and a beta' subunit. The core is associated with a delta subunit, and at least one of epsilon or omega. When a sigma factor is associated with the core the holoenzyme is formed, which can initiate transcription.

It catalyses the reaction RNA(n) + a ribonucleoside 5'-triphosphate = RNA(n+1) + diphosphate. A non-essential component of RNA polymerase (RNAP). This is DNA-directed RNA polymerase subunit epsilon from Lactococcus lactis subsp. cremoris (strain MG1363).